The chain runs to 616 residues: uncharacterized protein (616 aa).

The protein belongs to the UbiD family.

This is an uncharacterized protein from Helicobacter pylori (strain J99 / ATCC 700824) (Campylobacter pylori J99).